A 301-amino-acid polypeptide reads, in one-letter code: MAEITAALVKELREKTGAGMMDAKKALVENNGDQAAAIEWLRAKGLSKAAKKSDRAAAEGLVAVKLSDDGKSGAIVELNAETDFVARNEIFQKSLDGIAVAALKADGTVEAVSAAASPDGEGSVDDLIKRMIATIGENMTLRRVAKLSATGRVAAYTHNAVVPGMGKVGVLVALDGSGDLEDAGRKVAMHIAATSPAAATTEELDPALVESEKRVLTEQARESGKPDAVIEKMIVGRMQKFYKEVVLAEQPFIMDPDKTVGEFLKEQGATLKGFVHYKLGEGVEKAADNFADEVAALTKGA.

An involved in Mg(2+) ion dislocation from EF-Tu region spans residues 82–85 (TDFV).

The protein belongs to the EF-Ts family.

It localises to the cytoplasm. Associates with the EF-Tu.GDP complex and induces the exchange of GDP to GTP. It remains bound to the aminoacyl-tRNA.EF-Tu.GTP complex up to the GTP hydrolysis stage on the ribosome. The protein is Elongation factor Ts of Hyphomonas neptunium (strain ATCC 15444).